The chain runs to 299 residues: Serpentine receptor class gamma-30 (299 aa).

Helical transmembrane passes span 18–38, 59–79, 98–118, 137–157, 189–209, 223–243, and 260–280; these read GIQF…IKVL, ILSV…NYIP, ILFI…FMVV, IIPH…WTAF, IISS…MLCI, LTAS…MNIY, and ALTA…MLCL.

The protein belongs to the nematode receptor-like protein srg family.

The protein localises to the membrane. The chain is Serpentine receptor class gamma-30 (srg-30) from Caenorhabditis elegans.